The following is a 184-amino-acid chain: ATP-dependent protease subunit HslV (184 aa).

T8 is an active-site residue. Na(+)-binding residues include G165, D168, and T171.

It belongs to the peptidase T1B family. HslV subfamily. As to quaternary structure, a double ring-shaped homohexamer of HslV is capped on each side by a ring-shaped HslU homohexamer. The assembly of the HslU/HslV complex is dependent on binding of ATP.

It is found in the cytoplasm. It catalyses the reaction ATP-dependent cleavage of peptide bonds with broad specificity.. Its activity is regulated as follows. Allosterically activated by HslU binding. In terms of biological role, protease subunit of a proteasome-like degradation complex believed to be a general protein degrading machinery. The protein is ATP-dependent protease subunit HslV of Pediococcus pentosaceus (strain ATCC 25745 / CCUG 21536 / LMG 10740 / 183-1w).